The sequence spans 158 residues: Transcription elongation factor GreA (158 aa).

Residues 10-76 are a coiled coil; that stretch reads TLEGKKKLEE…QIEKMIRNAE (67 aa).

This sequence belongs to the GreA/GreB family.

Its function is as follows. Necessary for efficient RNA polymerase transcription elongation past template-encoded arresting sites. The arresting sites in DNA have the property of trapping a certain fraction of elongating RNA polymerases that pass through, resulting in locked ternary complexes. Cleavage of the nascent transcript by cleavage factors such as GreA or GreB allows the resumption of elongation from the new 3'terminus. GreA releases sequences of 2 to 3 nucleotides. The chain is Transcription elongation factor GreA from Halalkalibacterium halodurans (strain ATCC BAA-125 / DSM 18197 / FERM 7344 / JCM 9153 / C-125) (Bacillus halodurans).